Consider the following 396-residue polypeptide: Na(+)/H(+) antiporter NhaA 1 (396 aa).

The next 11 helical transmembrane spans lie at 15-35, 60-80, 96-116, 126-146, 155-175, 179-199, 207-227, 255-275, 290-312, 329-349, and 363-383; these read AGIFLLAAAVFALIFSNVGFL, LEFWVNDALMAIFFFSIGLEL, FLPSFAAIGGVIFPAVIFAVI, GWAIPTATDIAFAVGVMALLG, IFVLTLAIMDDLCAIVIIALF, ALNFTYLGLAFVCFLVLLVMC, IPFVIMSILLWIFVLHSGIHA, SLGYFVNYVVLPLFAFANAGV, PLGVMLGLFLGKQLGIFTFSWFL, LYAVAIICGIGFTMALFVDNL, and LAILLGSIISGVVGYFVAKAV.

Belongs to the NhaA Na(+)/H(+) (TC 2.A.33) antiporter family.

Its subcellular location is the cell inner membrane. The catalysed reaction is Na(+)(in) + 2 H(+)(out) = Na(+)(out) + 2 H(+)(in). Na(+)/H(+) antiporter that extrudes sodium in exchange for external protons. This is Na(+)/H(+) antiporter NhaA 1 from Campylobacter hominis (strain ATCC BAA-381 / DSM 21671 / CCUG 45161 / LMG 19568 / NCTC 13146 / CH001A).